The sequence spans 202 residues: dTTP/UTP pyrophosphatase (202 aa).

Asp-76 (proton acceptor) is an active-site residue.

This sequence belongs to the Maf family. YhdE subfamily. The cofactor is a divalent metal cation.

It is found in the cytoplasm. It carries out the reaction dTTP + H2O = dTMP + diphosphate + H(+). The catalysed reaction is UTP + H2O = UMP + diphosphate + H(+). In terms of biological role, nucleoside triphosphate pyrophosphatase that hydrolyzes dTTP and UTP. May have a dual role in cell division arrest and in preventing the incorporation of modified nucleotides into cellular nucleic acids. This Neisseria meningitidis serogroup B (strain ATCC BAA-335 / MC58) protein is dTTP/UTP pyrophosphatase.